The sequence spans 786 residues: Rho GTPase-activating protein 10 (786 aa).

Positions 7–262 constitute a BAR domain; the sequence is EFSDCYLDSP…IRQNPKDQKR (256 aa). In terms of domain architecture, PH spans 265-372; that stretch reads QFTAEGYLYV…WLEALGGKEA (108 aa). The Rho-GAP domain occupies 389–574; that stretch reads AQLDKMGFTI…ILIENHEKIF (186 aa). Disordered regions lie at residues 584–609 and 622–714; these read EPTCLSASPPNAPPRQSKRQGQRTKR and EGDS…PFPL. Basic residues predominate over residues 599-609; that stretch reads QSKRQGQRTKR. Low complexity predominate over residues 634–649; it reads PSSSQDSLSTPSPTTS. A compositionally biased stretch (polar residues) spans 673–701; the sequence is TATTPSQTRPSMVQWLNMQSPTTPSSNPA. Pro residues predominate over residues 702–714; it reads GTPPSPRMSPFPL. One can recognise an SH3 domain in the interval 728-786; that stretch reads VINRKARAVYPCEAEHSSELSFEIGAIFEDVQTSREPGWLEGTLNGKRGLIPQNYVKLL.

Interacts with PKN3. Interacts with caspase-activated PAK2 proteolytic fragment PAK-2p34; the interaction does not affect ARHGAP10 GTPase activation activity towards RHOA and CDC42. Interacts via its SH3 domain with PTK2/FAK1. Interacts with PTK2B/PYK2; the interaction negatively regulates ARHGAP10 GTPase-activating activity. Interacts with MICAL1 and WDR44; complex formation might transit from GRAF2/ARHGAP10-MICAL1 to GRAF2/ARHGAP10-WDR44 complexes. In terms of processing, phosphorylated on tyrosine residues, probably involving PTK2B/PYK2. In terms of tissue distribution, high levels of expression in brain, testes, liver, heart and kidney.

The protein localises to the cytoplasm. Its subcellular location is the perinuclear region. It localises to the cell membrane. The protein resides in the endosome membrane. Its function is as follows. GTPase-activating protein that catalyzes the conversion of active GTP-bound Rho GTPases to their inactive GDP-bound form, thus suppressing various Rho GTPase-mediated cellular processes. Also converts Cdc42 to an inactive GDP-bound state. Essential for PTKB2 regulation of cytoskeletal organization via Rho family GTPases. Inhibits PAK2 proteolytic fragment PAK-2p34 kinase activity and changes its localization from the nucleus to the perinuclear region. Stabilizes PAK-2p34 thereby increasing stimulation of cell death. Associates with MICAL1 on the endosomal membrane to promote Rab8-Rab10-dependent tubule extension. After dissociation with MICAL1, recruits WDR44 which connects the endoplasmic reticulum (ER) with the endosomal tubule, thereby participating in the export of a subset of neosynthesized proteins. In Mus musculus (Mouse), this protein is Rho GTPase-activating protein 10 (Arhgap10).